Consider the following 273-residue polypeptide: MCNTQATPSDPGITVAHPKKRYYRQRAHSNPMADHTFQYPVKPEIMDWSEYYPDYFKPLVPDSAHDDAKDLQERKEQHQVEFADIGCGYGGLLVELSPLFPNTLMLGLEIRVKVSDYVQDRIKSLRASHLGQYQNIACIRSNAMKYIPNFFKKGQLSKMFFLFPDPHFKKTKHKWRIISPTLLAEYAYVLRIGGMVYTITDVEEVHTWMVKHFTEHPLFERVAKEELVNDIVVGKLGTSTEEGKKVQRNKGLNLLAVFRRIENSTFIQRDSQQ.

Residues G86, E109, R111, N142, A143, and L162 each coordinate S-adenosyl-L-methionine. Residue D165 is part of the active site. Residues 166–174 (PHFKKTKHK) form an alphaC helix region. S-adenosyl-L-methionine contacts are provided by T240 and E242. The tract at residues 240–248 (TEEGKKVQR) is alpha6 helix.

Belongs to the class I-like SAM-binding methyltransferase superfamily. TrmB family. As to quaternary structure, catalytic component of the METTL1-WDR4 complex, composed of mettl1 and wdr4.

The protein localises to the nucleus. It carries out the reaction guanosine(46) in tRNA + S-adenosyl-L-methionine = N(7)-methylguanosine(46) in tRNA + S-adenosyl-L-homocysteine. The catalysed reaction is a guanosine in mRNA + S-adenosyl-L-methionine = an N(7)-methylguanosine in mRNA + S-adenosyl-L-homocysteine. The enzyme catalyses a guanosine in miRNA + S-adenosyl-L-methionine = an N(7)-methylguanosine in miRNA + S-adenosyl-L-homocysteine. The protein operates within tRNA modification; N(7)-methylguanine-tRNA biosynthesis. Its function is as follows. Catalytic component of METTL1-WDR4 methyltransferase complex that mediates the formation of N(7)-methylguanine in a subset of RNA species, such as tRNAs, mRNAs and microRNAs (miRNAs). Catalyzes the formation of N(7)-methylguanine at position 46 (m7G46) in a large subset of tRNAs that contain the 5'-RAGGU-3' motif within the variable loop. M7G46 interacts with C13-G22 in the D-loop to stabilize tRNA tertiary structure and protect tRNAs from decay. Also acts as a methyltransferase for a subset of internal N(7)-methylguanine in mRNAs. Internal N(7)-methylguanine methylation of mRNAs in response to stress promotes their relocalization to stress granules, thereby suppressing their translation. Also methylates a specific subset of miRNAs. The sequence is that of tRNA (guanine-N(7)-)-methyltransferase A (mettl1-A) from Xenopus tropicalis (Western clawed frog).